Here is a 276-residue protein sequence, read N- to C-terminus: Eukaryotic translation initiation factor 3 subunit G (276 aa).

S148 carries the phosphoserine modification. Residues 195–274 (TTLKISQLNS…LILHLEWSKK (80 aa)) form the RRM domain.

It belongs to the eIF-3 subunit G family. In terms of assembly, component of the eukaryotic translation initiation factor 3 (eIF-3) complex.

Its subcellular location is the cytoplasm. Its function is as follows. RNA-binding component of the eukaryotic translation initiation factor 3 (eIF-3) complex, which is involved in protein synthesis of a specialized repertoire of mRNAs and, together with other initiation factors, stimulates binding of mRNA and methionyl-tRNAi to the 40S ribosome. The eIF-3 complex specifically targets and initiates translation of a subset of mRNAs involved in cell proliferation. This subunit can bind 18S rRNA. This chain is Eukaryotic translation initiation factor 3 subunit G, found in Debaryomyces hansenii (strain ATCC 36239 / CBS 767 / BCRC 21394 / JCM 1990 / NBRC 0083 / IGC 2968) (Yeast).